A 463-amino-acid chain; its full sequence is MEHVIGGKFKLGRKIGSGSFGELYLGVNIQSSEEVAIKLESVKSRHPQLHYESKLYMLLQGGTGIPHLKWFGVEGEYNVMVIDLLGPSLEDLFNYCNRKFSLKTVLMLADQMINRVEYMHTRGFLHRDIKPDNFLMGLGRKASQVYVIDYGLAKKYRDLQTHKHIPYRENKNLTGTARYASVNTHLGVEQSRRDDLESLGYVLMYFLRGSLPWQGLKAGTKKQKYDKISEKKMLTPVEVLCKSYPTEFISYFHYCRSLRFEDKPDYSYLKRLFRDLFIREGYQLDYIFDWTKQGSESNRLRSSGRTSGLVGPSAERTERAAARQDVPDRFSGTVDPFARRTGSGSGHYGEHTKHRNILDSLLAPKTAVDLDKRRPTSSSRNGSTSRKALLSSSRPSSGDPIDPNRSNLIPTSSGSSRPSTMQRLHQSTGLETRSSLTKTARNVHDDPTLRTFERLSISADRRK.

The 270-residue stretch at 9–278 folds into the Protein kinase domain; that stretch reads FKLGRKIGSG…LKRLFRDLFI (270 aa). ATP-binding positions include 15–23 and K38; that span reads IGSGSFGEL. The active-site Proton acceptor is D128. Residues 296–306 show a composition bias toward polar residues; the sequence is ESNRLRSSGRT. Residues 296–448 are disordered; the sequence is ESNRLRSSGR…TARNVHDDPT (153 aa). The span at 315–328 shows a compositional bias: basic and acidic residues; the sequence is ERTERAAARQDVPD. 2 stretches are compositionally biased toward polar residues: residues 376–396 and 404–440; these read TSSS…SRPS and NRSN…TKTA.

It belongs to the protein kinase superfamily. CK1 Ser/Thr protein kinase family. Casein kinase I subfamily. As to quaternary structure, monomer. Post-translationally, autophosphorylated. Expressed in leaves, stems, panicles and seeds. Expressed in root tissues and lamina joints.

The protein localises to the cytoplasm. It is found in the nucleus. It carries out the reaction L-seryl-[protein] + ATP = O-phospho-L-seryl-[protein] + ADP + H(+). The catalysed reaction is L-threonyl-[protein] + ATP = O-phospho-L-threonyl-[protein] + ADP + H(+). With respect to regulation, inhibited by N-(2-aminoethyl)-5-chloroisoquinoline-8-sulfonamide (CKI-7). In terms of biological role, casein kinases are operationally defined by their preferential utilization of acidic proteins such as caseins as substrates. Can phosphorylate casein in vitro. Required for normal root development through modulation of cell elongation. Plants silencing CKI1 show abnormal root development, with reduced number of lateral and adventitious roots, and shortened primary roots as a result of reduced cell elongation. May be involved in abscisic acid (ABA) and brassinosteroid (BR) signaling pathways. Plays an important role in the adaptive growth and fitness under low temperature (LT) conditions. May confer tolerance to LT through an auxin-dependent process. In Oryza sativa subsp. japonica (Rice), this protein is Casein kinase 1 (CKI1).